Here is a 140-residue protein sequence, read N- to C-terminus: Zinc finger SWIM domain-containing protein 7 (140 aa).

The segment at 76–114 adopts an SWIM-type zinc-finger fold; that stretch reads YTCFTSCHYCPCPAFSFTVLRRNESLMCKHLLAVILSQA.

The protein belongs to the SWS1 family.

The protein localises to the nucleus. Involved in early stages of the homologous recombination repair (HRR) pathway of double-stranded DNA breaks arising during DNA replication or induced by DNA-damaging agents. This is Zinc finger SWIM domain-containing protein 7 (zswim7) from Danio rerio (Zebrafish).